The primary structure comprises 127 residues: Small ribosomal subunit protein uS13 (127 aa).

Residues 93-127 (RRSLPVRGQRTHTNARTRKGPRKGTVANKKKATAK) are disordered.

This sequence belongs to the universal ribosomal protein uS13 family. Part of the 30S ribosomal subunit. Forms a loose heterodimer with protein S19. Forms two bridges to the 50S subunit in the 70S ribosome.

Functionally, located at the top of the head of the 30S subunit, it contacts several helices of the 16S rRNA. In the 70S ribosome it contacts the 23S rRNA (bridge B1a) and protein L5 of the 50S subunit (bridge B1b), connecting the 2 subunits; these bridges are implicated in subunit movement. Contacts the tRNAs in the A and P-sites. The chain is Small ribosomal subunit protein uS13 from Koribacter versatilis (strain Ellin345).